Consider the following 313-residue polypeptide: Olfactory receptor 10G3 (313 aa).

The Extracellular segment spans residues 1–25 (MERINSTLLTAFILTGIPYPLRLRT). Asparagine 5 is a glycosylation site (N-linked (GlcNAc...) asparagine). The helical transmembrane segment at 26 to 46 (LFFVFFFLIYILTQLGNLLIL) threads the bilayer. At 47-54 (ITVWADPR) the chain is on the cytoplasmic side. The helical transmembrane segment at 55–76 (LHARPMYIFLGVLSVIDMSISS) threads the bilayer. Over 77–100 (IIVPRLMMNFTLGVKPIPFGGCVA) the chain is Extracellular. N-linked (GlcNAc...) asparagine glycosylation is present at asparagine 85. A disulfide bridge links cysteine 98 with cysteine 190. A helical membrane pass occupies residues 101 to 121 (QLYFYHFLGSTQCFLYTLMAY). The Cytoplasmic segment spans residues 122 to 140 (DRYLAICQPLRYPVLMTAK). Residues 141–161 (LSALLVAGAWMAGSIHGALQA) traverse the membrane as a helical segment. Residues 162–198 (ILTFRLPYCGPNQVDYFFCDIPAVLRLACADTTVNEL) are Extracellular-facing. A helical membrane pass occupies residues 199-218 (VTFVDIGVVVASCFSLILLS). Residues 219 to 238 (YIQIIQAILRIHTADGRRRA) lie on the Cytoplasmic side of the membrane. Residues 239–259 (FSTCGAHVTVVTVYYVPCAFI) traverse the membrane as a helical segment. Over 260-270 (YLRPETNSPLD) the chain is Extracellular. The chain crosses the membrane as a helical span at residues 271-291 (GAAALVPTAITPFLNPLIYTL). The Cytoplasmic portion of the chain corresponds to 292–313 (RNQEVKLALKRMLRSPRTPSEV).

Belongs to the G-protein coupled receptor 1 family.

It is found in the cell membrane. Functionally, odorant receptor. The chain is Olfactory receptor 10G3 (OR10G3) from Homo sapiens (Human).